We begin with the raw amino-acid sequence, 24 residues long: Acidic phospholipase A2 4 (24 aa).

It belongs to the phospholipase A2 family. Group II subfamily. It depends on Ca(2+) as a cofactor. In terms of tissue distribution, expressed by the venom gland.

The protein resides in the secreted. The enzyme catalyses a 1,2-diacyl-sn-glycero-3-phosphocholine + H2O = a 1-acyl-sn-glycero-3-phosphocholine + a fatty acid + H(+). PLA2 catalyzes the calcium-dependent hydrolysis of the 2-acyl groups in 3-sn-phosphoglycerides. This Trimeresurus stejnegeri (Chinese green tree viper) protein is Acidic phospholipase A2 4.